The sequence spans 342 residues: MAQVLIVGAGMTGSLCAALLRRQTSGPLYLAVWDKAEDSGGRMTTACSPHNPQCTADLGAQYITCTPHYAKKHQRFYDELLAYGVLRPLSSPIEGMVMKEGDCNFVAPQGISSIIKHYLKESGAEVYFRHRVTQINLRDDKWEVSKQTGSPEQFDLIVLTMPVPEILQLQGDITTLISECQRQQLEAVSYSSRYALGLFYEAGTKIDVPWAGQYITSNPCIRFVSIDNKKRNIESSEIGPSLVIHTTVPFGVTYLEHSIEDVQELVFQQLENILPGLPQPIATKCQKWRHSQVTNAAANCPGQMTLHHKPFLACGGDGFTQSNFDGCITSALCVLEALKNYI.

An N-terminal signal peptide occupies residues Met-1–Ala-17. FAD contacts are provided by residues Thr-12, Arg-42, and Gln-61 to Tyr-62.

This sequence belongs to the renalase family. The cofactor is FAD. Secreted into the blood by the kidney. Highly expressed in the kidney, expressed at lower level in heart, skeletal muscle and small intestine. Its plasma concentration is markedly reduced in patients with end-stage renal disease, as compared with healthy subjects.

The protein localises to the secreted. The enzyme catalyses 1,2-dihydro-beta-NAD + O2 + H(+) = H2O2 + NAD(+). It catalyses the reaction 1,2-dihydro-beta-NADP + O2 + H(+) = H2O2 + NADP(+). It carries out the reaction 1,6-dihydro-beta-NADP + O2 + H(+) = H2O2 + NADP(+). The catalysed reaction is 1,6-dihydro-beta-NAD + O2 + H(+) = H2O2 + NAD(+). Its function is as follows. Catalyzes the oxidation of the less abundant 1,2-dihydro-beta-NAD(P) and 1,6-dihydro-beta-NAD(P) to form beta-NAD(P)(+). The enzyme hormone is secreted by the kidney, and circulates in blood and modulates cardiac function and systemic blood pressure. Lowers blood pressure in vivo by decreasing cardiac contractility and heart rate and preventing a compensatory increase in peripheral vascular tone, suggesting a causal link to the increased plasma catecholamine and heightened cardiovascular risk. High concentrations of catecholamines activate plasma renalase and promotes its secretion and synthesis. The chain is Renalase (RNLS) from Homo sapiens (Human).